The sequence spans 529 residues: Bifunctional purine biosynthesis protein PurH (529 aa).

Residues 1-148 (MQQRRPVRRA…KNHKDVAIVV (148 aa)) form the MGS-like domain.

The protein belongs to the PurH family.

It carries out the reaction (6R)-10-formyltetrahydrofolate + 5-amino-1-(5-phospho-beta-D-ribosyl)imidazole-4-carboxamide = 5-formamido-1-(5-phospho-D-ribosyl)imidazole-4-carboxamide + (6S)-5,6,7,8-tetrahydrofolate. The catalysed reaction is IMP + H2O = 5-formamido-1-(5-phospho-D-ribosyl)imidazole-4-carboxamide. The protein operates within purine metabolism; IMP biosynthesis via de novo pathway; 5-formamido-1-(5-phospho-D-ribosyl)imidazole-4-carboxamide from 5-amino-1-(5-phospho-D-ribosyl)imidazole-4-carboxamide (10-formyl THF route): step 1/1. It functions in the pathway purine metabolism; IMP biosynthesis via de novo pathway; IMP from 5-formamido-1-(5-phospho-D-ribosyl)imidazole-4-carboxamide: step 1/1. This is Bifunctional purine biosynthesis protein PurH from Salmonella enteritidis PT4 (strain P125109).